Reading from the N-terminus, the 156-residue chain is Keratin, high-sulfur matrix protein, B2B (156 aa).

Alanine 1 bears the N-acetylalanine mark. 4 consecutive repeats follow at residues 26 to 35 (PTCSQTSCCQ), 36 to 45 (PTSIQTSCCQ), 46 to 55 (PISIQTSCCQ), and 56 to 65 (PTCLQTSGCE).

Its function is as follows. The keratin products of mammalian epidermal derivatives such as wool and hair consist of microfibrils embedded in a rigid matrix of other proteins. The matrix proteins include the high-sulfur and high-tyrosine keratins, having molecular weights of 6-20 kDa, whereas the microfibrils contain the larger, low-sulfur keratins (40-56 kDa). This is Keratin, high-sulfur matrix protein, B2B from Ovis aries (Sheep).